The primary structure comprises 181 residues: Ribonuclease HII (181 aa).

An RNase H type-2 domain is found at 1–181 (MICGIDEVGR…SLHRRNFKLI (181 aa)). 3 residues coordinate a divalent metal cation: aspartate 6, glutamate 7, and aspartate 98.

This sequence belongs to the RNase HII family. It depends on Mn(2+) as a cofactor. Mg(2+) is required as a cofactor.

It is found in the cytoplasm. It carries out the reaction Endonucleolytic cleavage to 5'-phosphomonoester.. Its function is as follows. Endonuclease that specifically degrades the RNA of RNA-DNA hybrids. The sequence is that of Ribonuclease HII from Borrelia garinii subsp. bavariensis (strain ATCC BAA-2496 / DSM 23469 / PBi) (Borreliella bavariensis).